A 162-amino-acid polypeptide reads, in one-letter code: SsrA-binding protein (162 aa).

The segment covering 137-154 (HDKREDTKAREWDREKAR) has biased composition (basic and acidic residues). The interval 137-162 (HDKREDTKAREWDREKARIMKNKHRG) is disordered.

This sequence belongs to the SmpB family.

Its subcellular location is the cytoplasm. In terms of biological role, required for rescue of stalled ribosomes mediated by trans-translation. Binds to transfer-messenger RNA (tmRNA), required for stable association of tmRNA with ribosomes. tmRNA and SmpB together mimic tRNA shape, replacing the anticodon stem-loop with SmpB. tmRNA is encoded by the ssrA gene; the 2 termini fold to resemble tRNA(Ala) and it encodes a 'tag peptide', a short internal open reading frame. During trans-translation Ala-aminoacylated tmRNA acts like a tRNA, entering the A-site of stalled ribosomes, displacing the stalled mRNA. The ribosome then switches to translate the ORF on the tmRNA; the nascent peptide is terminated with the 'tag peptide' encoded by the tmRNA and targeted for degradation. The ribosome is freed to recommence translation, which seems to be the essential function of trans-translation. This is SsrA-binding protein from Aeromonas hydrophila subsp. hydrophila (strain ATCC 7966 / DSM 30187 / BCRC 13018 / CCUG 14551 / JCM 1027 / KCTC 2358 / NCIMB 9240 / NCTC 8049).